Consider the following 271-residue polypeptide: Putative mitochondrial carrier protein PET8 (271 aa).

Solcar repeat units follow at residues 3–76, 91–177, and 187–270; these read STFL…MKQQ, AEVL…LKKK, and VSAW…VHSL. The next 6 membrane-spanning stretches (helical) occupy residues 6–26, 51–71, 97–117, 152–168, 193–213, and 251–271; these read LASLVSGAAAGTSTDVVFFPI, GLGSAVVASAPGASLFFVTYD, MLSSSLGEMSACLVRVPAEVI, GWWTTIMREIPFTCIQF, AVCGSLAGGIAAAATTPLDVL, and MWISAGGAIFLGVYEAVHSLF.

This sequence belongs to the mitochondrial carrier (TC 2.A.29) family.

The protein localises to the mitochondrion inner membrane. This chain is Putative mitochondrial carrier protein PET8 (PET8), found in Eremothecium gossypii (strain ATCC 10895 / CBS 109.51 / FGSC 9923 / NRRL Y-1056) (Yeast).